We begin with the raw amino-acid sequence, 73 residues long: Large ribosomal subunit protein bL31 (73 aa).

Belongs to the bacterial ribosomal protein bL31 family. Type A subfamily. In terms of assembly, part of the 50S ribosomal subunit.

Its function is as follows. Binds the 23S rRNA. This Cereibacter sphaeroides (strain ATCC 17029 / ATH 2.4.9) (Rhodobacter sphaeroides) protein is Large ribosomal subunit protein bL31.